The chain runs to 127 residues: Evasin-4 (127 aa).

An N-terminal signal peptide occupies residues 1 to 23; the sequence is MAFKYWFVFAAVLYARQWLSTKC. Cystine bridges form between Cys-50-Cys-69, Cys-65-Cys-112, Cys-86-Cys-117, and Cys-107-Cys-126. N-linked (GlcNAc...) asparagine glycosylation is found at Asn-54, Asn-64, Asn-70, Asn-77, Asn-83, Asn-106, and Asn-114.

The protein belongs to the evasin C8 family. Monomer.

It localises to the secreted. Functionally, salivary chemokine-binding protein which has chemokine-neutralizing activity and binds to host chemokines CCL1, CCL3, CCL5, CCL7, CCL8, CCL11, CCL14, CCL15, CCL16, CCL17, CCL18, CCL19, CCL21, CCL22, CCL23, CCL24, CCL25 and CCL26 with nanomolar affinity. Binds to CCL3 and CCL5 with 1:1 stoichiometry. Although binding to CCL25 is observed, does not inhibit CCL25-induced chemotaxis. Has been shown to reduce cardiac injury and inflammation in mice through its anti-CCL5 activity. This chain is Evasin-4, found in Rhipicephalus sanguineus (Brown dog tick).